The primary structure comprises 503 residues: ATP synthase subunit alpha (503 aa).

169–176 (GDRKTGKT) contacts ATP.

The protein belongs to the ATPase alpha/beta chains family. F-type ATPases have 2 components, CF(1) - the catalytic core - and CF(0) - the membrane proton channel. CF(1) has five subunits: alpha(3), beta(3), gamma(1), delta(1), epsilon(1). CF(0) has three main subunits: a(1), b(2) and c(9-12). The alpha and beta chains form an alternating ring which encloses part of the gamma chain. CF(1) is attached to CF(0) by a central stalk formed by the gamma and epsilon chains, while a peripheral stalk is formed by the delta and b chains.

It localises to the cell membrane. The enzyme catalyses ATP + H2O + 4 H(+)(in) = ADP + phosphate + 5 H(+)(out). Produces ATP from ADP in the presence of a proton gradient across the membrane. The alpha chain is a regulatory subunit. The protein is ATP synthase subunit alpha of Lactobacillus helveticus (strain DPC 4571).